A 1431-amino-acid polypeptide reads, in one-letter code: Stabilin-2 (1431 aa).

The Extracellular portion of the chain corresponds to 1-1322; it reads SLPSLLTRLE…PPTAATAAHS (1322 aa). One can recognise an FAS1 domain in the interval 2–130; sequence LPSLLTRLEQ…GVIHGLEKVL (129 aa). Residues Asn112 and Asn140 are each glycosylated (N-linked (GlcNAc...) asparagine). A Laminin EGF-like 1 domain is found at 207–272; sequence PQCQACPGRG…CSCVHGRCSQ (66 aa). 18 disulfides stabilise this stretch: Cys212–Cys226, Cys220–Cys236, Cys238–Cys247, Cys259–Cys270, Cys263–Cys280, Cys282–Cys291, Cys300–Cys310, Cys304–Cys320, Cys322–Cys333, Cys339–Cys352, Cys346–Cys362, Cys364–Cys375, Cys381–Cys394, Cys388–Cys404, Cys406–Cys417, Cys423–Cys436, Cys430–Cys446, and Cys448–Cys459. 2 N-linked (GlcNAc...) asparagine glycosylation sites follow: Asn231 and Asn243. EGF-like domains follow at residues 296–334, 335–376, 377–418, and 419–460; these read TTDN…TVCT, AINA…IVCL, EINP…KVCS, and LINV…IVCR. A glycan (N-linked (GlcNAc...) asparagine) is linked at Asn301. Asn329 is a glycosylation site (N-linked (GlcNAc...) asparagine). A glycan (N-linked (GlcNAc...) asparagine) is linked at Asn437. FAS1 domains are found at residues 460–588 and 604–745; these read RGSI…DKLL and VLQN…DCLL. Asn607 is a glycosylation site (N-linked (GlcNAc...) asparagine). Residues 822–887 form the Laminin EGF-like 2 domain; the sequence is PDCQACPGGP…SCSEHGQCDE (66 aa). Disulfide bonds link Cys827/Cys841, Cys835/Cys851, Cys853/Cys862, Cys874/Cys885, Cys879/Cys895, and Cys897/Cys906. N-linked (GlcNAc...) asparagine glycosylation is present at Asn858. An N-linked (GlcNAc...) asparagine glycan is attached at Asn929. 2 consecutive EGF-like domains span residues 947–987 and 988–1030; these read VVDF…YSCI and EIDP…VDCE. Cystine bridges form between Cys951/Cys964, Cys958/Cys973, Cys975/Cys986, Cys992/Cys1006, Cys1000/Cys1016, Cys1018/Cys1029, Cys1085/Cys1154, and Cys1109/Cys1130. One can recognise a Link domain in the interval 1063–1156; it reads GVFHLRSPLG…SEMWDVFCYR (94 aa). N-linked (GlcNAc...) asparagine glycans are attached at residues Asn1145, Asn1161, Asn1233, Asn1249, and Asn1258. An FAS1 4 domain is found at 1176–1310; it reads SGNLLQVLMS…GILHIISEPL (135 aa). Residues 1323–1343 form a helical membrane-spanning segment; that stretch reads GLGTGIFCAVVLVTGAIALAA. The Cytoplasmic segment spans residues 1344–1431; the sequence is YSYFRLKQRT…QQATTVTVPR (88 aa). The interaction with TMSB4X stretch occupies residues 1368 to 1378; it reads WLLASSSPRIS.

As to quaternary structure, interacts with GULP1, heparin, alpha-M/beta-2 integrin (ITGAM and ITGB2), and thymosin beta 4 (TMSB4X). Post-translationally, glycosylated. In terms of processing, proteolytically processed to yield a 175 kDa protein. As to expression, initially expressed in all vascular cells, including those of sinusoidal-like structures, vitellin veins, and hepatic veins or sinus venosus, in E13.5 fetal liver. The expression then progressively disappears in the portal and hepatic veins, but the expression in sinusoidals endothelial cells (SECs) is retained and becomes stronger during development.

The protein localises to the cytoplasm. The protein resides in the cell membrane. Phosphatidylserine receptor that enhances the engulfment of apoptotic cells. Hyaluronan receptor that binds to and mediates endocytosis of hyaluronic acid (HA). Also acts, in different species, as a primary systemic scavenger receptor for heparin (Hep), chondroitin sulfate (CS), dermatan sulfate (DS), nonglycosaminoglycan (GAG), acetylated low-density lipoprotein (AcLDL), pro-collagen propeptides and advanced glycation end products (AGE). May serve to maintain tissue integrity by supporting extracellular matrix turnover or it may contribute to maintaining fluidity of bodily liquids by resorption of hyaluronan. Counter receptor which plays an important role in lymphocyte recruitment in the hepatic vasculature. Binds to both Gram-positive and Gram-negative bacteria and may play a role in defense against bacterial infection. The proteolytically processed 175 kDa form also functions as an endocytosis receptor for heparin internalization as well as HA and CS. This chain is Stabilin-2, found in Rattus norvegicus (Rat).